The following is a 272-amino-acid chain: Indole-3-glycerol phosphate synthase (272 aa).

Belongs to the TrpC family.

The catalysed reaction is 1-(2-carboxyphenylamino)-1-deoxy-D-ribulose 5-phosphate + H(+) = (1S,2R)-1-C-(indol-3-yl)glycerol 3-phosphate + CO2 + H2O. It functions in the pathway amino-acid biosynthesis; L-tryptophan biosynthesis; L-tryptophan from chorismate: step 4/5. The chain is Indole-3-glycerol phosphate synthase from Mycobacterium leprae (strain Br4923).